Consider the following 316-residue polypeptide: Acetaldehyde dehydrogenase (316 aa).

Residue 11 to 14 (SGNI) coordinates NAD(+). The Acyl-thioester intermediate role is filled by C131. NAD(+) contacts are provided by residues 162–170 (SAGPGTRAN) and N289.

It belongs to the acetaldehyde dehydrogenase family. As to quaternary structure, interacts with MhpE.

The enzyme catalyses acetaldehyde + NAD(+) + CoA = acetyl-CoA + NADH + H(+). The protein operates within aromatic compound metabolism; 3-phenylpropanoate degradation. Functionally, catalyzes the conversion of acetaldehyde to acetyl-CoA, using NAD(+) and coenzyme A. Is the final enzyme in the meta-cleavage pathway for the degradation of aromatic compounds. The sequence is that of Acetaldehyde dehydrogenase from Klebsiella pneumoniae (strain 342).